The sequence spans 1204 residues: Probable cation-transporting ATPase 13A4 (1204 aa).

Over 1–32 (MGENPAKSHYAQLNLGEENEMEIFGYKTQCCR) the chain is Cytoplasmic. Residues 33-53 (KALCIAGYILSCGALLLLFYW) traverse the membrane as a helical segment. Residues 54 to 219 (KPEWDVWANC…FSVCLWFAED (166 aa)) are Extracellular-facing. A helical membrane pass occupies residues 220 to 242 (YMEYAAAIIIMSPLSISLTVYDL). Residues 243-397 (RQQSVKLQRL…NFRLYRDALR (155 aa)) lie on the Cytoplasmic side of the membrane. The chain crosses the membrane as a helical span at residues 398-418 (FLMCLIAFAAIGMIYTVCVFA). At 419–433 (LNGEEAGEVVKKALD) the chain is on the extracellular side. The chain crosses the membrane as a helical span at residues 434-454 (VITIAVPPALPAALTTGIIYT). Residues 455–897 (QRRLKKKGIF…REGRAALVTS (443 aa)) lie on the Cytoplasmic side of the membrane. Asp483 serves as the catalytic 4-aspartylphosphate intermediate. Residues Asp845 and Asp849 each coordinate Mg(2+). The chain crosses the membrane as a helical span at residues 898–918 (FCMFKYMALYSTIQYLGVLLL). The Extracellular portion of the chain corresponds to 919–929 (YWQLNSFGNYQ). A helical membrane pass occupies residues 930–950 (FLFQDLAITTVIGMTMSFTEA). The Cytoplasmic segment spans residues 951-967 (YPKLVPYRPPSQLVSPP). A helical transmembrane segment spans residues 968-988 (LLLSVILNILFSLGMQILGFL). Residues 989–1043 (MVQKQPWYSKTDIHSACLSVNNHVENSSSASSLGLHGVGGGDPTEVDNGYKSYEN) lie on the Extracellular side of the membrane. A helical membrane pass occupies residues 1044 to 1064 (TTVWLLSTINCLIIALVFSKG). At 1065 to 1075 (KPFRQPIYTNY) the chain is on the cytoplasmic side. A helical transmembrane segment spans residues 1076-1096 (VFIMVLVGQLGVCLFLVFADI). The Extracellular portion of the chain corresponds to 1097 to 1113 (DDLYSKMDLVCTPTTWR). The chain crosses the membrane as a helical span at residues 1114 to 1134 (ISMVMMLAVTLAVSFLVEEAI). Topologically, residues 1135–1204 (IENRALWLWL…PTFDSNEDAL (70 aa)) are cytoplasmic.

This sequence belongs to the cation transport ATPase (P-type) (TC 3.A.3) family. Type V subfamily.

It is found in the membrane. It catalyses the reaction ATP + H2O = ADP + phosphate + H(+). The sequence is that of Probable cation-transporting ATPase 13A4 (ATP13A4) from Gallus gallus (Chicken).